The chain runs to 163 residues: Olfactory marker protein (163 aa).

Ala2 is subject to N-acetylalanine.

The protein belongs to the olfactory marker protein family. As to quaternary structure, interacts with BEX1 and BEX2. Uniquely associated with mature olfactory receptor neurons.

It localises to the cytoplasm. In terms of biological role, may act as a modulator of the olfactory signal-transduction cascade. In Mus musculus (Mouse), this protein is Olfactory marker protein (Omp).